The primary structure comprises 257 residues: Thiazole synthase (257 aa).

Lys99 acts as the Schiff-base intermediate with DXP in catalysis. 1-deoxy-D-xylulose 5-phosphate-binding positions include Gly160, 186-187 (AG), and 208-209 (NT).

This sequence belongs to the ThiG family. In terms of assembly, homotetramer. Forms heterodimers with either ThiH or ThiS.

The protein localises to the cytoplasm. It carries out the reaction [ThiS sulfur-carrier protein]-C-terminal-Gly-aminoethanethioate + 2-iminoacetate + 1-deoxy-D-xylulose 5-phosphate = [ThiS sulfur-carrier protein]-C-terminal Gly-Gly + 2-[(2R,5Z)-2-carboxy-4-methylthiazol-5(2H)-ylidene]ethyl phosphate + 2 H2O + H(+). Its pathway is cofactor biosynthesis; thiamine diphosphate biosynthesis. Its function is as follows. Catalyzes the rearrangement of 1-deoxy-D-xylulose 5-phosphate (DXP) to produce the thiazole phosphate moiety of thiamine. Sulfur is provided by the thiocarboxylate moiety of the carrier protein ThiS. In vitro, sulfur can be provided by H(2)S. This chain is Thiazole synthase, found in Thermodesulfovibrio yellowstonii (strain ATCC 51303 / DSM 11347 / YP87).